The following is a 115-amino-acid chain: Iron-sulfur cluster insertion protein ErpA (115 aa).

Iron-sulfur cluster is bound by residues C43, C107, and C109.

Belongs to the HesB/IscA family. As to quaternary structure, homodimer. It depends on iron-sulfur cluster as a cofactor.

In terms of biological role, required for insertion of 4Fe-4S clusters for at least IspG. This Buchnera aphidicola subsp. Baizongia pistaciae (strain Bp) protein is Iron-sulfur cluster insertion protein ErpA.